The chain runs to 351 residues: Homeobox protein rough sheath 1 (351 aa).

Disordered stretches follow at residues 1–23 (MDQS…NSKA), 57–82 (AAAP…GAEM), and 187–229 (GGGS…PRAE). The segment covering 57 to 68 (AAAPSSSQQHQQ) has biased composition (low complexity). Basic and acidic residues predominate over residues 214-229 (PNGRENDPPEIDPRAE). One can recognise an ELK domain in the interval 232-252 (ELKYQLLKKYSGYLSSLRQEF). Residues 253-316 (SKKKKKGKLP…NQRKRHWKPS (64 aa)) constitute a DNA-binding region (homeobox; TALE-type).

Belongs to the TALE/KNOX homeobox family.

The protein localises to the nucleus. Plays a possible role in patterning the placement of lateral organs along the axis of the shoot. Mutations in RS1 alters cell fate and causes unregulated cell division and expansion in the leaf. Probably binds to the DNA sequence 5'-TGAC-3'. The chain is Homeobox protein rough sheath 1 (RS1) from Zea mays (Maize).